The primary structure comprises 229 residues: 7-cyano-7-deazaguanine synthase (229 aa).

8 to 18 (CSGGLDSSVIA) is a binding site for ATP. Residues cysteine 190, cysteine 203, cysteine 206, and cysteine 209 each contribute to the Zn(2+) site.

It belongs to the QueC family. It depends on Zn(2+) as a cofactor.

It carries out the reaction 7-carboxy-7-deazaguanine + NH4(+) + ATP = 7-cyano-7-deazaguanine + ADP + phosphate + H2O + H(+). It participates in purine metabolism; 7-cyano-7-deazaguanine biosynthesis. In terms of biological role, catalyzes the ATP-dependent conversion of 7-carboxy-7-deazaguanine (CDG) to 7-cyano-7-deazaguanine (preQ(0)). This Methanopyrus kandleri (strain AV19 / DSM 6324 / JCM 9639 / NBRC 100938) protein is 7-cyano-7-deazaguanine synthase.